The chain runs to 201 residues: NADH-quinone oxidoreductase subunit C 1 (201 aa).

Belongs to the complex I 30 kDa subunit family. NDH-1 is composed of 14 different subunits. Subunits NuoB, C, D, E, F, and G constitute the peripheral sector of the complex.

It is found in the cell inner membrane. The enzyme catalyses a quinone + NADH + 5 H(+)(in) = a quinol + NAD(+) + 4 H(+)(out). Its function is as follows. NDH-1 shuttles electrons from NADH, via FMN and iron-sulfur (Fe-S) centers, to quinones in the respiratory chain. The immediate electron acceptor for the enzyme in this species is believed to be ubiquinone. Couples the redox reaction to proton translocation (for every two electrons transferred, four hydrogen ions are translocated across the cytoplasmic membrane), and thus conserves the redox energy in a proton gradient. The chain is NADH-quinone oxidoreductase subunit C 1 from Rhizobium meliloti (strain 1021) (Ensifer meliloti).